A 318-amino-acid polypeptide reads, in one-letter code: Retinol dehydrogenase 5 (318 aa).

The helical transmembrane segment at M1 to R21 threads the bilayer. Topologically, residues Q22–K288 are lumenal. F32–L56 provides a ligand contact to NADP(+). An N-linked (GlcNAc...) asparagine glycan is attached at N160. Substrate is bound at residue S163. Y175 functions as the Proton acceptor in the catalytic mechanism. Residues L289–V309 form a helical membrane-spanning segment. At L310–Y318 the chain is on the cytoplasmic side.

It belongs to the short-chain dehydrogenases/reductases (SDR) family. Homodimer. Widely expressed. In the eye, abundant in the retinal pigment epithelium.

It localises to the endoplasmic reticulum membrane. The catalysed reaction is 11-cis-retinol + NAD(+) = 11-cis-retinal + NADH + H(+). The enzyme catalyses 9-cis-retinol + NAD(+) = 9-cis-retinal + NADH + H(+). It carries out the reaction 13-cis-retinol + NAD(+) = 13-cis-retinal + NADH + H(+). It catalyses the reaction androsterone + NAD(+) = 5alpha-androstan-3,17-dione + NADH + H(+). The catalysed reaction is 5alpha-androstane-3alpha,17beta-diol + NAD(+) = 17beta-hydroxy-5alpha-androstan-3-one + NADH + H(+). The protein operates within cofactor metabolism; retinol metabolism. With respect to regulation, inhibited by 9-cis-, 13-cis- and all-trans-retinoic acids, with the most potent inhibitor being 13-cis-retinoic acid. Weakly inhibited by oleic acid. Its function is as follows. Catalyzes the oxidation of cis-isomers of retinol, including 11-cis-, 9-cis-, and 13-cis-retinol in an NAD-dependent manner. Has no activity towards all-trans retinal. Plays a significant role in 11-cis retinol oxidation in the retinal pigment epithelium cells (RPE). Also recognizes steroids (androsterone, androstanediol) as its substrates. The chain is Retinol dehydrogenase 5 from Homo sapiens (Human).